The following is a 330-amino-acid chain: uncharacterized protein (330 aa).

Residues 2–22 (IKPIYLIIIGTVICLVILYYF) form a helical membrane-spanning segment. N-linked (GlcNAc...) asparagine; by host glycans are attached at residues Asn72, Asn94, Asn234, and Asn315.

Its subcellular location is the membrane. This is an uncharacterized protein from Acanthamoeba polyphaga mimivirus (APMV).